A 361-amino-acid chain; its full sequence is MAGNTIGQLFRVTTFGESHGLALGCIVDGVPPGIPLTEADLQHDLDRRRPGTSRYTTQRREPDQVKILSGVFEGVTTGTSIGLLIENTDQRSQDYSAIKDVFRPGHADYTYEQKYGLRDYRGGGRSSARETAMRVAAGAIAKKYLAEKFGIEIRGCLTQMGDIPLEIKDWSLVEQNPFFCPDPDKIDALDELMRALKKEGDSIGAKVTVVASGVPAGLGEPVFDRLDADIAHALMSINAVKGVEIGDGFDVVALRGSQNRDEITKDGFQSNHAGGIFGGISSGQQIIAHMALKPTSSITVPGRTINRFGEEVEMITKGRHDPCVGIRAVPIAEAMLAIVLMDHLLRQRAQNADVKTDIPRW.

Residues R48 and R54 each contribute to the NADP(+) site. FMN contacts are provided by residues 125-127 (RSS), 238-239 (NA), G278, 293-297 (KPTSS), and R319.

This sequence belongs to the chorismate synthase family. As to quaternary structure, homotetramer. Requires FMNH2 as cofactor.

It catalyses the reaction 5-O-(1-carboxyvinyl)-3-phosphoshikimate = chorismate + phosphate. It participates in metabolic intermediate biosynthesis; chorismate biosynthesis; chorismate from D-erythrose 4-phosphate and phosphoenolpyruvate: step 7/7. In terms of biological role, catalyzes the anti-1,4-elimination of the C-3 phosphate and the C-6 proR hydrogen from 5-enolpyruvylshikimate-3-phosphate (EPSP) to yield chorismate, which is the branch point compound that serves as the starting substrate for the three terminal pathways of aromatic amino acid biosynthesis. This reaction introduces a second double bond into the aromatic ring system. The chain is Chorismate synthase from Shigella flexneri.